Consider the following 880-residue polypeptide: MAQCSGLPEMAKAYEAAEVEKKWYQYWMEKGYFKPNPDSDKKPFVIIMPPPNVTGELHLGHALTATLEDIMIRWHRMLGEPALWLPGADHAGIAAQVVVERMLAKQGKTRQELGRELFLEKMWEWVNPCRERIRHQHMRLGASCDWDRETFTLDPGPVKAVREIFTNLYQKGLIYRGERIINWCPRCATAVSDLEVDHKDLAGHIWHLRYPLEDGSGFVTVATTRPETMLGDTAVAVHPDDARYTGMVGKNVLLPIMNRRIPVIADEAVDMAFGTGAVKVTPAHDPNDFEMGLRHSLPMITIQNRDTTMNENAGPCSGMTAKACREYVVSELKSLGLLLKIEDYTHSVGHCQRCSAVIEPMVSKQWFVKMEPLAKPALEAVNSGRIQILPERFTKVYQNWMENIRDWCISRQLWWGHRIPVWYCPCGEMIVSKEDPTACPKCGSTKLEQDPDVLDTWFSSGLWPHSTLGWPDQTEDLKRFYPGSVLETAYDIIFFWVARMIVMGIEDMKEVPFRTVYLHGLIRDDKGEKMSKTKGNVIDPLKVIDQYGTDALRFAVTFGTSPGNDSKLGQTKLEAARNFVNKLWNASRFVIMNLGEEKELLPEAGLPLEDRWILSRMNRVTADVIRLMEEFQFGEAQRVLQDFVWGEFCDWYIELAKVRLRDEASVSPRPVLVKVLSTILRLLHPYMPFITEELWSYLRPYLPKSLGETDIIVAPFPQADETCFDEQAESIMGSLVEVVRSLRNLRAEHNVEISRYIQANIYAGDMAEVLSNYLGAVETLSRSRPVNILPGHYSGASTATEVVLVLNGIEVVVPMSTMVDLEAEAKRVEAEIAELETQIERLSARLSDTQFLAKAPQAVVDKERTKLEGYIEKVSRLKAV.

Positions 51–61 (PNVTGELHLGH) match the 'HIGH' region motif. The short motif at 529-533 (KMSKT) is the 'KMSKS' region element. Residue K532 coordinates ATP. Positions 815–854 (MSTMVDLEAEAKRVEAEIAELETQIERLSARLSDTQFLAK) form a coiled coil.

It belongs to the class-I aminoacyl-tRNA synthetase family. ValS type 1 subfamily. Monomer.

The protein localises to the cytoplasm. The enzyme catalyses tRNA(Val) + L-valine + ATP = L-valyl-tRNA(Val) + AMP + diphosphate. Functionally, catalyzes the attachment of valine to tRNA(Val). As ValRS can inadvertently accommodate and process structurally similar amino acids such as threonine, to avoid such errors, it has a 'posttransfer' editing activity that hydrolyzes mischarged Thr-tRNA(Val) in a tRNA-dependent manner. This is Valine--tRNA ligase from Dehalococcoides mccartyi (strain ATCC BAA-2266 / KCTC 15142 / 195) (Dehalococcoides ethenogenes (strain 195)).